An 86-amino-acid chain; its full sequence is MSKGHSLQDPYLNTLRKEKVPVSIYLVNGIKLQGSIESFDQFVVLLKNTVSQMVYKHAISTVVPARPVRLPSPTDSEHGDSEPGNA.

The Sm domain occupies 9 to 68 (DPYLNTLRKEKVPVSIYLVNGIKLQGSIESFDQFVVLLKNTVSQMVYKHAISTVVPARPV). Residues 66-86 (RPVRLPSPTDSEHGDSEPGNA) are disordered. Residues 75-86 (DSEHGDSEPGNA) show a composition bias toward basic and acidic residues.

This sequence belongs to the Hfq family. As to quaternary structure, homohexamer.

RNA chaperone that binds small regulatory RNA (sRNAs) and mRNAs to facilitate mRNA translational regulation in response to envelope stress, environmental stress and changes in metabolite concentrations. Also binds with high specificity to tRNAs. In Pseudomonas putida (strain ATCC 700007 / DSM 6899 / JCM 31910 / BCRC 17059 / LMG 24140 / F1), this protein is RNA-binding protein Hfq.